A 115-amino-acid chain; its full sequence is NADH-ubiquinone oxidoreductase chain 3 (115 aa).

Transmembrane regions (helical) follow at residues 3-23, 55-75, and 84-104; these read FVLA…ITFW, FFLV…LLPL, and LPLM…GLTY.

This sequence belongs to the complex I subunit 3 family. Core subunit of respiratory chain NADH dehydrogenase (Complex I) which is composed of 45 different subunits. Interacts with TMEM186. Interacts with TMEM242.

It localises to the mitochondrion inner membrane. The enzyme catalyses a ubiquinone + NADH + 5 H(+)(in) = a ubiquinol + NAD(+) + 4 H(+)(out). In terms of biological role, core subunit of the mitochondrial membrane respiratory chain NADH dehydrogenase (Complex I) which catalyzes electron transfer from NADH through the respiratory chain, using ubiquinone as an electron acceptor. Essential for the catalytic activity of complex I. The chain is NADH-ubiquinone oxidoreductase chain 3 from Pongo abelii (Sumatran orangutan).